A 282-amino-acid polypeptide reads, in one-letter code: Pantothenate synthetase (282 aa).

Residue Met-30–His-37 participates in ATP binding. His-37 acts as the Proton donor in catalysis. A (R)-pantoate-binding site is contributed by Gln-61. Gln-61 contacts beta-alanine. Residue Gly-147–Asp-150 coordinates ATP. Gln-153 contributes to the (R)-pantoate binding site. Residues Val-176 and Lys-184 to Arg-187 each bind ATP.

This sequence belongs to the pantothenate synthetase family. As to quaternary structure, homodimer.

Its subcellular location is the cytoplasm. The catalysed reaction is (R)-pantoate + beta-alanine + ATP = (R)-pantothenate + AMP + diphosphate + H(+). The protein operates within cofactor biosynthesis; (R)-pantothenate biosynthesis; (R)-pantothenate from (R)-pantoate and beta-alanine: step 1/1. In terms of biological role, catalyzes the condensation of pantoate with beta-alanine in an ATP-dependent reaction via a pantoyl-adenylate intermediate. The chain is Pantothenate synthetase from Bacillus cereus (strain ATCC 14579 / DSM 31 / CCUG 7414 / JCM 2152 / NBRC 15305 / NCIMB 9373 / NCTC 2599 / NRRL B-3711).